Consider the following 767-residue polypeptide: General transcription and DNA repair factor IIH helicase/translocase subunit XPB1 (767 aa).

The disordered stretch occupies residues 1-51 (MGNGERGRPNKKMKYGGKDDQKMKNIQNAEDYYDDADEDSRDGEGEEKKRD). Residues 31-41 (DYYDDADEDSR) show a composition bias toward acidic residues. Positions 42 to 51 (DGEGEEKKRD) are enriched in basic and acidic residues. The Helicase ATP-binding domain maps to 293–455 (MFGNGRARSG…DLNFLIGPKL (163 aa)). 306 to 313 (LPCGAGKS) contacts ATP. The DEVH box signature appears at 408-411 (DEVH). In terms of domain architecture, Helicase C-terminal spans 510–676 (RACEFLIRFH…SLPPPDAGSS (167 aa)). The tract at residues 742 to 767 (RHKSGQQFKKPKDPTKRHNLFKKRYV) is disordered. The short motif at 750-766 (KKPKDPTKRHNLFKKRY) is the Nuclear localization signal element. The span at 758 to 767 (RHNLFKKRYV) shows a compositional bias: basic residues.

It belongs to the helicase family. RAD25/XPB subfamily. Component of the 7-subunit TFIIH core complex composed of XPB, XPD, TFB1/GTF2H1, GTF2H2/P44, TFB4/GTF2H3, TFB2/GTF2H4 and TFB5/GTF2H5, which is active in NER. The core complex associates with the 3-subunit CDK-activating kinase (CAK) module composed of CYCH1/cyclin H1, CDKD and MAT1/At4g30820 to form the 10-subunit holoenzyme (holo-TFIIH) active in transcription. Expressed ubiquitously.

The protein resides in the nucleus. The enzyme catalyses Couples ATP hydrolysis with the unwinding of duplex DNA by translocating in the 3'-5' direction.. The catalysed reaction is ATP + H2O = ADP + phosphate + H(+). ATP-dependent 3'-5' DNA helicase/translocase; binds dsDNA rather than ssDNA, unzipping it in a translocase rather than classical helicase activity. Component of the general transcription and DNA repair factor IIH (TFIIH) core complex. When complexed to CDK-activating kinase (CAK), involved in RNA transcription by RNA polymerase II. The ATPase activity of XPB/ERCC3, but not its helicase activity, is required for DNA opening; it may wrap around the damaged DNA wedging it open, causing localized melting and twisting that allows XPD/ERCC2 helicase to anchor. The ATP-dependent helicase activity of XPB/ERCC3 may be required for promoter escape. Also involved in transcription-coupled nucleotide excision repair (NER) of damaged DNA. In NER, TFIIH acts by opening DNA around the lesion to allow the excision of the damaged oligonucleotide and its replacement by a new DNA fragment. The structure of the TFIIH transcription complex differs from the NER-TFIIH complex. Partially complements UV sensitivity of a yeast SSL2 mutation. Required during the early stages of development, including seed germination. The polypeptide is General transcription and DNA repair factor IIH helicase/translocase subunit XPB1 (XPB1) (Arabidopsis thaliana (Mouse-ear cress)).